The sequence spans 198 residues: Nucleoid occlusion factor SlmA (198 aa).

One can recognise an HTH tetR-type domain in the interval N10–L70. A DNA-binding region (H-T-H motif) is located at residues T33–F52. Positions D119–K144 form a coiled coil.

Belongs to the nucleoid occlusion factor SlmA family. In terms of assembly, homodimer. Interacts with FtsZ.

The protein localises to the cytoplasm. The protein resides in the nucleoid. Required for nucleoid occlusion (NO) phenomenon, which prevents Z-ring formation and cell division over the nucleoid. Acts as a DNA-associated cell division inhibitor that binds simultaneously chromosomal DNA and FtsZ, and disrupts the assembly of FtsZ polymers. SlmA-DNA-binding sequences (SBS) are dispersed on non-Ter regions of the chromosome, preventing FtsZ polymerization at these regions. The sequence is that of Nucleoid occlusion factor SlmA from Klebsiella pneumoniae (strain 342).